We begin with the raw amino-acid sequence, 581 residues long: Penicillin-binding protein activator LpoA (581 aa).

A signal peptide spans 1–26 (MLSILMQGLRLKKCFLPILVMFFLAG). The N-palmitoyl cysteine moiety is linked to residue Cys-27. Cys-27 is lipidated: S-diacylglycerol cysteine.

It belongs to the LpoA family. In terms of assembly, interacts with PBP1a.

Its subcellular location is the cell outer membrane. Functionally, regulator of peptidoglycan synthesis that is essential for the function of penicillin-binding protein 1A (PBP1a). The chain is Penicillin-binding protein activator LpoA from Histophilus somni (strain 129Pt) (Haemophilus somnus).